The sequence spans 15639 residues: FR901469 synthetase (15639 aa).

Residues 5–81 form the Carrier 1 domain; the sequence is HTSDGLRKLL…DLVDKIIEQQ (77 aa). O-(pantetheine 4'-phosphoryl)serine is present on S42. The segment covering 82 to 94 has biased composition (acidic residues); that stretch reads LEEEEEDDDSLDN. Positions 82 to 105 are disordered; the sequence is LEEEEEDDDSLDNESERDHSQKDL. Positions 140–553 are condensation 1; sequence PCLSMQEGCL…RDFLPLTEDD (414 aa). Residues 579–971 are adenylation 1; it reads TISKQPDAVA…LGRRDTQVKI (393 aa). Residues 1108–1184 form the Carrier 2 domain; it reads TPATAIEKEL…ELALVARSTT (77 aa). The residue at position 1145 (S1145) is an O-(pantetheine 4'-phosphoryl)serine. An epimerase 1 region spans residues 1219–1626; it reads RSSNRFNQSV…TITHLVKRLA (408 aa). Residues 1667–2097 are condensation 2; sequence EDVLPCTPIQ…LGNLSLLTNN (431 aa). Positions 2122 to 2518 are adenylation 2; the sequence is QEAAKEYTNA…GRRDNQIKIR (397 aa). Positions 2654–2730 constitute a Carrier 3 domain; that stretch reads VPATALEKQL…ELALKAKSTT (77 aa). An O-(pantetheine 4'-phosphoryl)serine modification is found at S2691. The interval 2761–3176 is epimerase 2; it reads VSAGEHRYNQ…TELLHRLEQM (416 aa). Residues 3215–3640 form a condensation 3 region; the sequence is QDIYPCSPTQ…DDLIMMSPED (426 aa). The segment at 3669–4059 is adenylation 3; the sequence is TQPHAPAVAA…MGRIDSQIKI (391 aa). Residues 4193–4269 enclose the Carrier 4 domain; that stretch reads PPSNDAERMV…QLAAIVTQRG (77 aa). Position 4230 is an O-(pantetheine 4'-phosphoryl)serine (S4230). The tract at residues 4316-4714 is condensation 4; it reads EDVYPCTPLQ…ILAHGTGLEE (399 aa). The segment at 4756-5149 is adenylation 4; the sequence is TEAASTRPDA…GRLDTQAKLR (394 aa). Positions 5284-5360 constitute a Carrier 5 domain; it reads EPATIMERQL…DLASHIDHHT (77 aa). O-(pantetheine 4'-phosphoryl)serine is present on S5321. The segment at 5402-5802 is condensation 5; it reads EDIYPCTPLQ…TVFAQLCDSS (401 aa). Residues 5847–6238 form an adenylation 5 region; the sequence is KYPNEPAVHA…LGRRDSQMKV (392 aa). A Carrier 6 domain is found at 6375–6451; sequence QPSTTAEIKL…DMAKIVEEHV (77 aa). Residue S6412 is modified to O-(pantetheine 4'-phosphoryl)serine. The condensation 6 stretch occupies residues 6494–6889; that stretch reads EDVYPATPLQ…RFAKVYQQLS (396 aa). The tract at residues 6952-7335 is adenylation 6; the sequence is WDGSMTYAEL…GRRDTQIKIR (384 aa). A Carrier 7 domain is found at 7473 to 7546; sequence TAMEEQLRTV…QLALLASTDE (74 aa). S7507 carries the O-(pantetheine 4'-phosphoryl)serine modification. The tract at residues 7580-7992 is epimerase 3; the sequence is MGENRYNQSV…SKTLEELTTQ (413 aa). A condensation 7 region spans residues 8034–8459; it reads EDVFPASPMQ…QRMRNISLAS (426 aa). The interval 8486 to 8882 is adenylation 7; the sequence is QKSVHARPDA…GRRDTQVKIR (397 aa). The Carrier 8 domain maps to 9015 to 9091; it reads QPATDAERQL…DLAKTIQDSE (77 aa). Residue S9052 is modified to O-(pantetheine 4'-phosphoryl)serine. A condensation 8 region spans residues 9136–9535; that stretch reads EDVYPCTPLQ…FAAIFRQLCD (400 aa). Positions 9583–9974 are adenylation 8; that stretch reads KNPHAIAVNA…GRRDNQMKIR (392 aa). Residues 10110-10186 form the Carrier 9 domain; the sequence is EPATPMEMQL…GLAALIQKQI (77 aa). Position 10147 is an O-(pantetheine 4'-phosphoryl)serine (S10147). The disordered stretch occupies residues 10186–10208; sequence IDEEEEYDDSEEEEEDDEEEVRE. A compositionally biased stretch (acidic residues) spans 10187–10206; the sequence is DEEEEYDDSEEEEEDDEEEV. The condensation 9 stretch occupies residues 10240–10662; it reads VEDVYPCTPL…VLSETDKTKI (423 aa). Residues 10683 to 11082 form an adenylation 9 region; the sequence is KQAIERPNAP…GRRDTQIKIR (400 aa). In terms of domain architecture, Carrier 10 spans 11217 to 11293; it reads EPATGMERHL…DLARETESQG (77 aa). Residue S11254 is modified to O-(pantetheine 4'-phosphoryl)serine. Positions 11329–11725 are condensation 10; it reads EDVYPCTPLQ…ETIFQQLSSV (397 aa). The interval 11770-12165 is adenylation 10; it reads FKRTADKQPE…GRRDTQIKVR (396 aa). The region spanning 12298 to 12374 is the Carrier 11 domain; it reads EPSTEMERRI…DLAAAVQGRI (77 aa). An O-(pantetheine 4'-phosphoryl)serine modification is found at S12335. The segment at 12418 to 12830 is condensation 11; it reads EDVYPATPLQ…IQDIEMVSEQ (413 aa). The adenylation 11 stretch occupies residues 12861–13249; the sequence is SRADEIAICA…GRRDTQIKIR (389 aa). Positions 13383–13459 constitute a Carrier 12 domain; that stretch reads MPGTVQEEQL…QLGQKVKEAV (77 aa). S13420 bears the O-(pantetheine 4'-phosphoryl)serine mark. An epimerase 4 region spans residues 13476-13901; it reads APIQQMFFEQ…LKDMTSTLLQ (426 aa). Positions 13940-14369 are condensation 12; that stretch reads EDILPCSPIQ…SIVGEHDLQQ (430 aa). An adenylation 12 region spans residues 14390 to 14789; it reads RDAAHRTPDA…GRGDGQIKIR (400 aa). Positions 14916-14992 constitute a Carrier 13 domain; it reads LPASADEGAL…DMASVASAAR (77 aa). S14953 bears the O-(pantetheine 4'-phosphoryl)serine mark. Residues 15062–15433 are condensation 13; the sequence is QHAVDLAALK…DIMVRLASQQ (372 aa). Disordered stretches follow at residues 15434–15511 and 15617–15639; these read EGTV…ENRQ and VQTN…KGHI. A compositionally biased stretch (low complexity) spans 15455–15472; that stretch reads NGTNGSNGDGTDAANGIG. Positions 15482-15494 are enriched in basic and acidic residues; sequence AVEKSSGDAEVEK. The segment covering 15495 to 15511 has biased composition (polar residues); sequence VSTNGHADNNTSAENRQ.

The protein belongs to the NRP synthetase family.

Its pathway is antifungal biosynthesis. Functionally, nonribosomal peptide synthetase; part of the gene cluster that mediates the biosynthesis of the antifungal antibiotic FR901469, an inhibitor of beta-1,3-glucansynthase, exerting antifungal activity against the pathogenes Candida albicans and Aspergillus fumigatus. FR901469 is a cyclic depsipeptide containing 12 amino acid residues and a fatty acid chain. The NRPS frbI contains 12 modules responsible for the formation of the depsipeptide backbone which is denoted as Acyl-Thr-Ala-Tyr-Val-4OHPro-Thr-Thr-3OHPro-threo3OHGln-Gly-Thr-Orn-OH (C71H116N14O23). The PKS frbB is probably involved in the production of the hydrocarbon chain, and the acyl-CoA ligase frbC might be involved in the transport of the chain to the peptide ptoduct of frbI. Because FR901469 contains 3 hydroxylated amino acid residues, the 3 oxygenases frbA, frbH, and frbJ might be participating in amino acid hydroxylation. As no thioesterase domains were detected in frbI or frbB, the thioesterases frbD and frbE may instead release and cyclize the products of the NRPS and PKS, respectively. This chain is FR901469 synthetase, found in Dothideomycetidae sp. (strain 11243) (Fungal sp. (strain No.11243)).